Consider the following 164-residue polypeptide: Pyruvoyl-dependent arginine decarboxylase (164 aa).

Residue Ser-52 is modified to Pyruvic acid (Ser).

The protein belongs to the PdaD family. Pyruvate is required as a cofactor.

It catalyses the reaction L-arginine + H(+) = agmatine + CO2. This chain is Pyruvoyl-dependent arginine decarboxylase, found in Methanococcus vannielii (strain ATCC 35089 / DSM 1224 / JCM 13029 / OCM 148 / SB).